The sequence spans 154 residues: 6,7-dimethyl-8-ribityllumazine synthase (154 aa).

Residues F22, 56–58 (AFE), and 80–82 (TVI) contribute to the 5-amino-6-(D-ribitylamino)uracil site. 85–86 (ST) serves as a coordination point for (2S)-2-hydroxy-3-oxobutyl phosphate. The active-site Proton donor is the H88. F113 is a binding site for 5-amino-6-(D-ribitylamino)uracil. R127 is a binding site for (2S)-2-hydroxy-3-oxobutyl phosphate.

Belongs to the DMRL synthase family.

It carries out the reaction (2S)-2-hydroxy-3-oxobutyl phosphate + 5-amino-6-(D-ribitylamino)uracil = 6,7-dimethyl-8-(1-D-ribityl)lumazine + phosphate + 2 H2O + H(+). Its pathway is cofactor biosynthesis; riboflavin biosynthesis; riboflavin from 2-hydroxy-3-oxobutyl phosphate and 5-amino-6-(D-ribitylamino)uracil: step 1/2. Catalyzes the formation of 6,7-dimethyl-8-ribityllumazine by condensation of 5-amino-6-(D-ribitylamino)uracil with 3,4-dihydroxy-2-butanone 4-phosphate. This is the penultimate step in the biosynthesis of riboflavin. In Lactococcus lactis subsp. cremoris (strain MG1363), this protein is 6,7-dimethyl-8-ribityllumazine synthase.